We begin with the raw amino-acid sequence, 224 residues long: MIKILLVEDDLGLSNSVFDFLDDFADVMQVFDGEEGLYEAESGVYDLILLDLMLPEKNGFQVLKELREKGITTPVLIMTAKESLDDKGHGFELGADDYLTKPFYLEELKMRIQALLKRSGKFNENTLTYGNIVVNLSTNTVKVEDTPVELLGKEFDLLVYFLQNQNVILPKTQIFDRLWGFDSDTTISVVEVYVSKVRKKLKGTTFAENLQTLRSVGYLLKDVQ.

Residues 3 to 116 enclose the Response regulatory domain; it reads KILLVEDDLG…ELKMRIQALL (114 aa). At aspartate 51 the chain carries 4-aspartylphosphate. The ompR/PhoB-type DNA-binding region spans 124-222; it reads ENTLTYGNIV…LRSVGYLLKD (99 aa).

Post-translationally, phosphorylated by CiaH.

Its subcellular location is the cytoplasm. Member of the two-component regulatory system CiaH/CiaR. Involved in early steps of competence regulation and in penicillin susceptibility. This is Transcriptional regulatory protein CiaR (ciaR) from Streptococcus pneumoniae (strain ATCC BAA-255 / R6).